A 675-amino-acid chain; its full sequence is L-type lectin-domain containing receptor kinase IV.1 (675 aa).

A signal peptide spans 1-22 (MFLKLLTIFFFFFFNLIFQSSS). Residues 23–291 (QSLNFAYNNG…EPKRISEFYK (269 aa)) lie on the Extracellular side of the membrane. The tract at residues 25–261 (LNFAYNNGFN…SEHYILGWSF (237 aa)) is legume-lectin like. 6 N-linked (GlcNAc...) asparagine glycosylation sites follow: Asn57, Asn79, Asn112, Asn134, Asn153, and Asn186. A helical membrane pass occupies residues 292 to 312 (IGMPLISLFLIFSFIFLVCYI). Residues 313–675 (VRRRRKFAEE…IADSQLSGGR (363 aa)) are Cytoplasmic-facing. One can recognise a Protein kinase domain in the interval 347 to 624 (FKEKGLLGTG…LHYLRGDAKL (278 aa)). Residues 353–361 (LGTGGFGSV) and Lys376 contribute to the ATP site. Asp472 (proton acceptor) is an active-site residue.

The protein in the C-terminal section; belongs to the protein kinase superfamily. Ser/Thr protein kinase family. This sequence in the N-terminal section; belongs to the leguminous lectin family.

The protein resides in the membrane. The catalysed reaction is L-seryl-[protein] + ATP = O-phospho-L-seryl-[protein] + ADP + H(+). It carries out the reaction L-threonyl-[protein] + ATP = O-phospho-L-threonyl-[protein] + ADP + H(+). In Arabidopsis thaliana (Mouse-ear cress), this protein is L-type lectin-domain containing receptor kinase IV.1 (LECRK41).